A 316-amino-acid polypeptide reads, in one-letter code: Insulin-like growth factor-binding protein 2 (316 aa).

An N-terminal signal peptide occupies residues 1 to 29 (MLPRLGGTALSLLPLLLLLLGTGGRGARA). The IGFBP N-terminal domain maps to 31 to 126 (VLFRCPPCTP…VLGEGTCEKR (96 aa)). Disulfide bonds link C35/C76, C38/C78, C46/C79, C68/C82, C90/C103, and C97/C123. Residues 189–217 (QHRQMGKGGKHHLGLEEPKKLRPPPARTP) are disordered. One can recognise a Thyroglobulin type-1 domain in the interval 215-297 (RTPCQQELDQ…APTIRGDPEC (83 aa)). 3 disulfides stabilise this stretch: C218–C252, C263–C274, and C276–C297. Residues 292–294 (RGD) carry the Cell attachment site motif.

Interacts with IGF1. Interacts with IGF2. Interacts (via RGD motif) with integrin alpha5/ITGA5; this interaction induces cell migration, adhesion or apoptosis according to the context. Interacts with PTPRB; this interaction leads to PTPRB dimerization and inactivation. Cleaved by MMP9 leading to release of free IGF2 from IGFBP2-IGF2 complex, which contributes to enhance the motility and the growth of astrocytes. In terms of processing, O-glycosylated.

The protein resides in the secreted. Its function is as follows. May have both growth-inhibiting and growth-promoting effects, depending on tissue type; increases IGF-induced DNA synthesis in the uterine epithelium. IGF-binding proteins prolong the half-life of the IGFs and have been shown to either inhibit or stimulate the growth promoting effects of the IGFs on cell culture. They alter the interaction of IGFs with their cell surface receptors. Functionally, multifunctional protein that plays a critical role in regulating the availability of IGFs such as IGF1 and IGF2 to their receptors and thereby regulates IGF-mediated cellular processes including proliferation, differentiation, and apoptosis in a cell-type specific manner. Functions coordinately with receptor protein tyrosine phosphatase beta/PTPRB and the IGF1 receptor to regulate IGF1-mediated signaling by stimulating the phosphorylation of PTEN leading to its inactivation and AKT1 activation. Plays a positive role in cell migration via interaction with integrin alpha5/ITGA5 through an RGD motif. Additionally, interaction with ITGA5/ITGB1 enhances the adhesion of endothelial progenitor cells to endothelial cells. Upon mitochondrial damage, facilitates apoptosis with ITGA5 of podocytes, and then activates the phosphorylation of focal adhesion kinase (FAK)-mediated mitochondrial injury. This is Insulin-like growth factor-binding protein 2 (IGFBP2) from Sus scrofa (Pig).